We begin with the raw amino-acid sequence, 1203 residues long: Cingulin (1203 aa).

The interval M7–A357 is head. Residues E25–A48 are disordered. A ZIM motif is present at residues A48 to G62. Residues A54 to V67 form an interaction with TJP1/ZO1 region. Residues E89–Q268 are disordered. Residues S96, S135, S137, S140, S155, and S165 each carry the phosphoserine modification. Positions P166–G191 are enriched in polar residues. The span at E207–S231 shows a compositional bias: basic and acidic residues. Phosphoserine is present on residues S214, S217, S258, S276, S338, and S351. Low complexity predominate over residues G246–R267. A coiled-coil region spans residues V358 to A1160. K579 is subject to N6-acetyllysine. Positions A883 to K903 are enriched in basic and acidic residues. Disordered regions lie at residues A883 to L908 and A1160 to D1181. A tail region spans residues S1161–C1203. 3 positions are modified to phosphoserine: S1175, S1176, and S1182.

It belongs to the cingulin family. In terms of assembly, homodimer. Interacts with TJP1/ZO1 and SPEF1.

It localises to the cell junction. Its subcellular location is the tight junction. Functionally, probably plays a role in the formation and regulation of the tight junction (TJ) paracellular permeability barrier. The sequence is that of Cingulin from Papio anubis (Olive baboon).